A 370-amino-acid chain; its full sequence is Small ribosomal subunit biogenesis GTPase RsgA 1 (370 aa).

In terms of domain architecture, CP-type G spans 97–255 (QTQLDRPPIA…LADTPGFNQP (159 aa)). GTP is bound by residues 146–149 (NKSD) and 197–205 (GPSGVGKSS). Zn(2+) is bound by residues Cys280, Cys285, His287, and Cys293. The segment at 325–370 (PESTLKLKTKGKGQSQYEPKLESKKYRRTSRRTQVQGLQDLYQEEE) is disordered.

The protein belongs to the TRAFAC class YlqF/YawG GTPase family. RsgA subfamily. Monomer. Associates with 30S ribosomal subunit, binds 16S rRNA. Zn(2+) serves as cofactor.

The protein localises to the cytoplasm. Functionally, one of several proteins that assist in the late maturation steps of the functional core of the 30S ribosomal subunit. Helps release RbfA from mature subunits. May play a role in the assembly of ribosomal proteins into the subunit. Circularly permuted GTPase that catalyzes slow GTP hydrolysis, GTPase activity is stimulated by the 30S ribosomal subunit. In Nostoc sp. (strain PCC 7120 / SAG 25.82 / UTEX 2576), this protein is Small ribosomal subunit biogenesis GTPase RsgA 1.